We begin with the raw amino-acid sequence, 381 residues long: Succinyl-diaminopimelate desuccinylase (381 aa).

H69 contacts Zn(2+). D71 is a catalytic residue. Residue D103 participates in Zn(2+) binding. Residue E137 is the Proton acceptor of the active site. Residues E138, E166, and H355 each coordinate Zn(2+).

Belongs to the peptidase M20A family. DapE subfamily. In terms of assembly, homodimer. The cofactor is Zn(2+). It depends on Co(2+) as a cofactor.

It carries out the reaction N-succinyl-(2S,6S)-2,6-diaminopimelate + H2O = (2S,6S)-2,6-diaminopimelate + succinate. The protein operates within amino-acid biosynthesis; L-lysine biosynthesis via DAP pathway; LL-2,6-diaminopimelate from (S)-tetrahydrodipicolinate (succinylase route): step 3/3. In terms of biological role, catalyzes the hydrolysis of N-succinyl-L,L-diaminopimelic acid (SDAP), forming succinate and LL-2,6-diaminopimelate (DAP), an intermediate involved in the bacterial biosynthesis of lysine and meso-diaminopimelic acid, an essential component of bacterial cell walls. The chain is Succinyl-diaminopimelate desuccinylase from Rickettsia akari (strain Hartford).